Here is a 1101-residue protein sequence, read N- to C-terminus: Selenocysteine insertion sequence-binding protein 2-like (1101 aa).

Disordered regions lie at residues 154–206, 240–295, 320–387, 884–1010, and 1030–1101; these read LGQV…AGPD, LWKS…PDSG, QKKP…SESL, TSDG…ISVE, and TLQL…TQTT. Residues 255-265 are compositionally biased toward low complexity; sequence AESSSEQGASE. S276 is modified (phosphoserine). Over residues 327–346 the composition is skewed to polar residues; it reads KNQTFSRGGRQTEQRNNSQV. Basic and acidic residues-rich tracts occupy residues 356-371 and 892-908; these read SSER…DNKH and ENEK…EKPS. The span at 925–939 shows a compositional bias: low complexity; the sequence is ATGSTTSATSAGKST. Positions 940-950 are enriched in basic and acidic residues; that stretch reads ASDKEEVKPDD. Over residues 954 to 964 the composition is skewed to polar residues; it reads ASQQSTETGSL. A compositionally biased stretch (acidic residues) spans 988–1002; it reads LEEEEDEDEEEEEDY. Polar residues predominate over residues 1030–1039; it reads TLQLGKTLNG. Over residues 1040 to 1057 the composition is skewed to acidic residues; sequence SEEDNVEQSGEEEAEAPE. Residues 1070-1087 show a composition bias toward polar residues; the sequence is ADQQASPGQQKSSNCSSL.

Functionally, binds SECIS (Sec insertion sequence) elements present on selenocysteine (Sec) protein mRNAs, but does not promote Sec incorporation into selenoproteins in vitro. The chain is Selenocysteine insertion sequence-binding protein 2-like (SECISBP2L) from Homo sapiens (Human).